The chain runs to 511 residues: Probable lipid II flippase MurJ (511 aa).

Helical transmembrane passes span 31-51 (IFGAGMATDAFFVAFKLPNLL), 90-110 (LLTLALAVVTVAGMLAAPWVI), 130-150 (LLKITFPYILLISLASLVGAI), 159-179 (IPAFAPTLLNISMIGFALFAA), 182-202 (FNPPVLALAWAVTVGGVLQLV), 237-257 (ILGVSVSQISLIINTIFASFL), 271-291 (LMEFPSGVLGVALGTILLPSL), 314-334 (CFLLALPSAVALGILSGPLTV), 354-374 (LIAYSVGLIGLIVVKVLAPGF), 383-403 (PVKIAIVTLILTQLMNLAFIG), 407-427 (HAGLSLSIGLAACLNASLLYW), 443-463 (AFLLRLVVAVLVMSGVLLGML), and 481-501 (LMAVVLAGIAAYFAALAVLGF).

This sequence belongs to the MurJ/MviN family.

The protein localises to the cell inner membrane. Its pathway is cell wall biogenesis; peptidoglycan biosynthesis. Its function is as follows. Involved in peptidoglycan biosynthesis. Transports lipid-linked peptidoglycan precursors from the inner to the outer leaflet of the cytoplasmic membrane. In Escherichia coli O157:H7, this protein is Probable lipid II flippase MurJ.